Here is a 171-residue protein sequence, read N- to C-terminus: 3-hydroxydecanoyl-[acyl-carrier-protein] dehydratase (171 aa).

The active site involves His-70.

Belongs to the thioester dehydratase family. FabA subfamily. As to quaternary structure, homodimer.

Its subcellular location is the cytoplasm. The enzyme catalyses a (3R)-hydroxyacyl-[ACP] = a (2E)-enoyl-[ACP] + H2O. The catalysed reaction is (3R)-hydroxydecanoyl-[ACP] = (2E)-decenoyl-[ACP] + H2O. It catalyses the reaction (2E)-decenoyl-[ACP] = (3Z)-decenoyl-[ACP]. The protein operates within lipid metabolism; fatty acid biosynthesis. Functionally, necessary for the introduction of cis unsaturation into fatty acids. Catalyzes the dehydration of (3R)-3-hydroxydecanoyl-ACP to E-(2)-decenoyl-ACP and then its isomerization to Z-(3)-decenoyl-ACP. Can catalyze the dehydratase reaction for beta-hydroxyacyl-ACPs with saturated chain lengths up to 16:0, being most active on intermediate chain length. The polypeptide is 3-hydroxydecanoyl-[acyl-carrier-protein] dehydratase (Pseudomonas aeruginosa (strain LESB58)).